The chain runs to 3133 residues: MRGGRDPVPVPVLGDYAMVCAKNGIILQWRYNVKECELSCTGGQQYTVCADSCLRKCSDTALAASGQCKPVCVEGCACSPSQLLDDNGVCVPVAKCPCIHKGLQFNAGYKEIRPGRRERELCTCVGARWDCKPATPEEIQNYPPAEDLRSNSTAQNMEFTTCETSEPLTCKNMHLPPSTQTAECRPGCQCKKGQVLDTASKRCVPATQCPCHHAGRSYPDGHLMQEECNKCECKNGNWSCTQRKCAGVCGAWGDSHVNTFDGTQYDFEGVCTYLLAKGAMDGTDGFDVEIQNVPCGTTGATCSKSVTLKVGGAGNEEIVSLTKNAPIPDISKLKRIKMRKAGAYVFLDVPSLGMSLQWDRGLRVYVKIDTMWQGRVKGLCGNYNGDMRDDFQTPSGGGMSESSALIFADSWKLKPTCPKPQPVIDHCKQRPERKEWAQSVCGALKRYPFSLCAGEVGAGAYVARCERDACDAGADCECACAALAAYAHACAHRGVTFNWRTNDLCPMQCDEVCSNYDSCVSACPVETCDNILYYAETTARCEQDTCVEGCKPKKSCPEGSVYKNDSTTECVPRAKCKPVCMTLDGGREVLEGEIIEEDACHTCRCSKKHKVCTGQPCSTEAPRIQATSSSAEPATERPHEPLKCVTGWTPWINRGPAEIGPDGQSVESEPLPKPNELQIGKPMCKPEMMKKIECRTVNDHKTPKETGLNVECSLENGLVCEEPEKTCPDFEIKVYCECEEPQDTSPPVTVTSEASSEPVSTTLATTTSRCPPGEVYQACAYKCDRLCDHFKKTLIAKGRCISEMCVDGCVDESVASNGCEGSSRWRDERTCVPVKDCTCYNDGQIVKPGGVTESGCIKCQCLDNSLYCDSKDCVSLNIPHQGSTHLPYIVRPVSTTITSTTTTTTTSTTTTTTTPEPTETTTETTVPLIIKSTVSPPPECSPDNYIDLVMGDEPLPDTAFSASSEFSEIFAPHNARLNRGPTNSGAGSWNPKVNNDKQYIQVELPRREPIYGVVLQGSPIFDQYVTSYEIMYGDDGNTFSTVDGPDGKPKIFRGPIDNTHPVKQMISPPIEAKVVRIRPLTWHDEISLRLEIIGCAEPLTTETSEPSPTSESPLQCTEPLGLIGELPLENIQVSSNSEEKDYLSINGNRGWKPLYNTPGWVMFDFTGPRNITGILTKGGNDGWVTSYKVLYTSDFETFNPVIDKDGKEKIFPANFDGIVSVTNEFHPPIRARYLKVLPQKWNKNIELRIEPIGCFEPYPEILRSLPEEEEGREEPQVVRKEYGMSQEREMPNCHICPGVEAKECTCSYPEYFDGENCVPRAECPCVESFMTYPVGSTFRGANCDECVCKLGGTTECKPFKECQCDDESLVPKLSPTTCDCTCEPCTNGTKICKTSKLCLALESWCDGVQDCPDDERDCTTSTARTTTTEPTVVTTVAPTQAATAPPTTTTPKPVVECPKVECPPGYIISYTTGSSSSYSRAFSSDLPPPRPRYSYQRYYRGRSTGGYSGYAKTGYSKGGFSKGGFSKGGYGYPSIPRSNQAFTLDKPALTNKQPTSKEECAQFKCISKLPAFKPGVVPPPVACSVVTCPAGYTLKLDKVPTGYNKCPQYECVPPLERPVFCNMTGRTFNTFDGMEYKYDVCFHMLARDNKFDAWLIIVRKNCRLDGCTNELIVMQDDQLIQVKPNMMVTYNNYEYTIEQTKKICFQKNSFDVDRLGNGISITSRKYNFTVLFNKEGDVKIGVLKKHMGGVDGLCGAYDGSLANERRLPDGRVATSIDEFGRSWAKPGVPADACAPRVASAHKQRRAWDLCNVIAEEPFSQCGKVLNLDKWRHICLEKICECTDLVVNGTKRTEEQCRCLVLQQMAAECLAADAGVDLASWRLMMDCPADCPPPLVHYDCYRKRCEETCAPYPNAARACPAQEGQCSPGCYCPDGKLRKGDQCVLPADCLDCTCTGVGTPAKYTTFEGDDLPFLGNCTYLASRDRNQTGEHKYQVYATNGPCDDNANIVCTKIVHLIYEKNVIHISKDPTTKKLRTVIGKTAVFKYPVKENWGTISLLNGQDVSVTLPDIHVELTVSQLNLEFAVRVPTFLYGNRTEGLCGVCAGYQDFLVTSNGTVTDDFDLYGKSWQASPEKLTELEVPSDEQCDAPPPPAPCTPPPPDNNTCYHLYNADRFGACHALVEPQPYVESCEADECGGHGPCDALQRYAAACAELGLCLPDWRRELCPYPCEEPFVYRACVDCERTCDNYEQLQTSPEKCTNKPVEGCFCPEGKVRVNNTCIEPGKCFPCGVDGHYAGDEWQEDASTLCACARSPHGTALVGCRATSCAPPVCAHGEDLRTAPPPPGQCCPEYDCVAKPEAQCKETKKIVCDYGQVLKQKTNPSGCKEYFCECKPSSECEVIPPESEVEIVEAGIHREIDNSGCCPRVSLVCRPETCPKPPHCPQFQTLASVNITGKCCPEYKCELPKDKCIVTLEWEAAAKGGEKPREKPQTVLKDLEAVWLDGPCRSCECALSGAGPAATCAVSACPAVVSSELFVLEPRPVPFACCPEPVQVACRHQDNVYKVGEKWKSPTDVCETYECAADGDGKLQRLAAVQRCDRHCQPGWKYVPAEADSGQCCGKCEPVACVVDGEEKPIGEKWTSSDFCTNFTCVNLNGTLQVQSSNETCPEISDAERKQFVLKEQKVPGKCCPKIEREACTSGRSDIPGRRELDVDRELVRELPMRAGRGRRPALRGLRAALRDRLPTRLEVLPAPAECCGRCKPSPASWKGGRGPSGRARERPVGESWTSADFCTNYTCADLHGTLQVQSSNETCPEVSEAVKKQFVLKEEKIPGKCCPKVEPVACRDGDKIYQEVQVWTTPDPCTNRTCRREDGQLSVGRTVEHCERQCRRGWTYSPPAADHCCGRCVQSACLVDDQLKEPGSTWSSADNCTTFSCDRSGEEVFVTSATEHCPDVSACDPADIVNTTCCQICNEKPQALSKCVLRASELRHCRSDPHPMGAHGLCVNKFPITGFTEVHGSCDSGTIYNNQTGTHESACECCQAAKYSGVSVRLTCEDGTVRPHRVATPARCHCAACGPGLTKHPKPGHASYTGTKNPVQPERDREYVIPDISSASGEARRNHDSNYITTLIISF.

Residues 40–96 (CTGGQQYTVCADSCLRKCSDTALAASGQCKPVCVEGCACSPSQLLDDNGVCVPVAKC) form the TIL 1 domain. N-linked (GlcNAc...) asparagine glycosylation is present at N151. One can recognise a TIL 2 domain in the interval 153–209 (TAQNMEFTTCETSEPLTCKNMHLPPSTQTAECRPGCQCKKGQVLDTASKRCVPATQC). N237 is a glycosylation site (N-linked (GlcNAc...) asparagine). The VWFD 1 domain occupies 247 to 418 (GVCGAWGDSH…DSWKLKPTCP (172 aa)). Intrachain disulfides connect C249–C380, C271–C417, and C295–C302. The TIL 3 domain occupies 509–576 (CDEVCSNYDS…TTECVPRAKC (68 aa)). N-linked (GlcNAc...) asparagine glycosylation is present at N564. The interval 661–680 (PDGQSVESEPLPKPNELQIG) is disordered. The 68-residue stretch at 770-837 (CPPGEVYQAC…ERTCVPVKDC (68 aa)) folds into the TIL 4 domain. Residues 899-924 (STTTTTTTSTTTTTTTPEPTETTTET) form a disordered region. Cystine bridges form between C940–C1095 and C1116–C1254. F5/8 type C domains are found at residues 940 to 1095 (CSPD…IIGC) and 1116 to 1254 (CTEP…PIGC). N-linked (GlcNAc...) asparagine glycosylation is found at N1170, N1387, N1622, N1727, and N1847. A VWFD 2 domain is found at 1619-1794 (VFCNMTGRTF…KPGVPADACA (176 aa)). 2 cysteine pairs are disulfide-bonded: C1621-C1754 and C1641-C1793. Residues 1890 to 1948 (CPPPLVHYDCYRKRCEETCAPYPNAARACPAQEGQCSPGCYCPDGKLRKGDQCVLPADC) enclose the TIL 5 domain. In terms of domain architecture, VWFD 3 spans 1951–2136 (CTCTGVGTPA…WQASPEKLTE (186 aa)). Intrachain disulfides connect C1953/C2099 and C2001/C2009. Residues N1975 and N1985 are each glycosylated (N-linked (GlcNAc...) asparagine). Residues N2093, N2113, N2161, N2276, and N2451 are each glycosylated (N-linked (GlcNAc...) asparagine). A TIL 6 domain is found at 2229–2285 (CEEPFVYRACVDCERTCDNYEQLQTSPEKCTNKPVEGCFCPEGKVRVNNTCIEPGKC). Residues 2553 to 2622 (VACRHQDNVY…DSGQCCGKCE (70 aa)) enclose the VWFC 1 domain. 9 N-linked (GlcNAc...) asparagine glycosylation sites follow: N2647, N2654, N2663, N2794, N2810, N2865, N2929, N2964, and N3028. The region spanning 2842 to 2907 (VACRDGDKIY…AADHCCGRCV (66 aa)) is the VWFC 2 domain. Cystine bridges form between C2971–C3040, C2991–C3054, C3004–C3070, and C3020–C3072. The CTCK domain maps to 2971–3076 (CNEKPQALSK…PARCHCAACG (106 aa)).

In terms of processing, may be converted into the 260 kDa mature hemocytin by proteolysis.

In terms of biological role, adhesive protein and relates to hemostasis or encapsulation of foreign substances for self-defense. The protein is Hemocytin of Bombyx mori (Silk moth).